The following is a 237-amino-acid chain: Phosphoribosylaminoimidazole-succinocarboxamide synthase (237 aa).

It belongs to the SAICAR synthetase family.

It catalyses the reaction 5-amino-1-(5-phospho-D-ribosyl)imidazole-4-carboxylate + L-aspartate + ATP = (2S)-2-[5-amino-1-(5-phospho-beta-D-ribosyl)imidazole-4-carboxamido]succinate + ADP + phosphate + 2 H(+). The protein operates within purine metabolism; IMP biosynthesis via de novo pathway; 5-amino-1-(5-phospho-D-ribosyl)imidazole-4-carboxamide from 5-amino-1-(5-phospho-D-ribosyl)imidazole-4-carboxylate: step 1/2. This Deinococcus radiodurans (strain ATCC 13939 / DSM 20539 / JCM 16871 / CCUG 27074 / LMG 4051 / NBRC 15346 / NCIMB 9279 / VKM B-1422 / R1) protein is Phosphoribosylaminoimidazole-succinocarboxamide synthase.